The following is a 151-amino-acid chain: MARIKYTTELDAETSAKAMGSELHISPKKSRELCKAIKGMRTNAARQYLEDVVILKQAVPFGRHNDSLGHRKGPMAAGRYPVKVASEMLKLLKNAESNAEYKGLNPEHMFIAHTAMNRGRVIHGMRPRARGRASPENTETVNLEMIISEVR.

The protein belongs to the universal ribosomal protein uL22 family. In terms of assembly, part of the 50S ribosomal subunit.

In terms of biological role, this protein binds specifically to 23S rRNA. It makes multiple contacts with different domains of the 23S rRNA in the assembled 50S subunit and ribosome. The globular domain of the protein is located near the polypeptide exit tunnel on the outside of the subunit, while an extended beta-hairpin is found that lines the wall of the exit tunnel in the center of the 70S ribosome. This is Large ribosomal subunit protein uL22 from Methanococcoides burtonii (strain DSM 6242 / NBRC 107633 / OCM 468 / ACE-M).